Consider the following 417-residue polypeptide: NADH-quinone oxidoreductase subunit D (417 aa).

The protein belongs to the complex I 49 kDa subunit family. NDH-1 is composed of 14 different subunits. Subunits NuoB, C, D, E, F, and G constitute the peripheral sector of the complex.

Its subcellular location is the cell inner membrane. The catalysed reaction is a quinone + NADH + 5 H(+)(in) = a quinol + NAD(+) + 4 H(+)(out). Its function is as follows. NDH-1 shuttles electrons from NADH, via FMN and iron-sulfur (Fe-S) centers, to quinones in the respiratory chain. The immediate electron acceptor for the enzyme in this species is believed to be ubiquinone. Couples the redox reaction to proton translocation (for every two electrons transferred, four hydrogen ions are translocated across the cytoplasmic membrane), and thus conserves the redox energy in a proton gradient. The polypeptide is NADH-quinone oxidoreductase subunit D (Leptothrix cholodnii (strain ATCC 51168 / LMG 8142 / SP-6) (Leptothrix discophora (strain SP-6))).